The chain runs to 357 residues: Protein-glutamate methylesterase/protein-glutamine glutaminase (357 aa).

A Response regulatory domain is found at 3 to 120 (RVLVVDDSAF…SIDLYKVRDM (118 aa)). D54 is modified (4-aspartylphosphate). One can recognise a CheB-type methylesterase domain in the interval 161 to 355 (FRAGKQLICI…AAIMTYMKKE (195 aa)). Catalysis depends on residues S173, H200, and D296.

Belongs to the CheB family. In terms of processing, phosphorylated by CheA. Phosphorylation of the N-terminal regulatory domain activates the methylesterase activity.

The protein localises to the cytoplasm. It catalyses the reaction [protein]-L-glutamate 5-O-methyl ester + H2O = L-glutamyl-[protein] + methanol + H(+). It carries out the reaction L-glutaminyl-[protein] + H2O = L-glutamyl-[protein] + NH4(+). Involved in chemotaxis. Part of a chemotaxis signal transduction system that modulates chemotaxis in response to various stimuli. Catalyzes the demethylation of specific methylglutamate residues introduced into the chemoreceptors (methyl-accepting chemotaxis proteins or MCP) by CheR. Also mediates the irreversible deamidation of specific glutamine residues to glutamic acid. The chain is Protein-glutamate methylesterase/protein-glutamine glutaminase from Bacillus licheniformis (strain ATCC 14580 / DSM 13 / JCM 2505 / CCUG 7422 / NBRC 12200 / NCIMB 9375 / NCTC 10341 / NRRL NRS-1264 / Gibson 46).